A 125-amino-acid chain; its full sequence is Small ribosomal subunit protein uS13 (125 aa).

The segment at 101–125 is disordered; the sequence is QRTKTNARTRKGKRKTVANKKIAAK.

It belongs to the universal ribosomal protein uS13 family. Part of the 30S ribosomal subunit. Forms a loose heterodimer with protein S19. Forms two bridges to the 50S subunit in the 70S ribosome.

Functionally, located at the top of the head of the 30S subunit, it contacts several helices of the 16S rRNA. In the 70S ribosome it contacts the 23S rRNA (bridge B1a) and protein L5 of the 50S subunit (bridge B1b), connecting the 2 subunits; these bridges are implicated in subunit movement. Contacts the tRNAs in the A and P-sites. The sequence is that of Small ribosomal subunit protein uS13 from Borrelia duttonii (strain Ly).